The sequence spans 770 residues: Metabotropic glutamate receptor-like protein F (770 aa).

An N-terminal signal peptide occupies residues 1-22 (MKIKNFIYFLIYFIFLFKVING). At 23–370 (QNKTCKISVL…STVDYPESLK (348 aa)) the chain is on the extracellular side. Asparagine 24, asparagine 185, asparagine 260, asparagine 286, asparagine 319, and asparagine 344 each carry an N-linked (GlcNAc...) asparagine glycan. A helical transmembrane segment spans residues 371–391 (IGVTVVSGFCIFLCLISMIIV). The Cytoplasmic portion of the chain corresponds to 392-405 (IKFKEAKVIKSSSP). The chain crosses the membrane as a helical span at residues 406–426 (IFCLLILFGCIVIFVGCIMFA). Residues 427-442 (RSPTDGSCRSRVWLLS) lie on the Extracellular side of the membrane. Residues 443-463 (LGYTIFLGNLMVKNWRIWLLF) form a helical membrane-spanning segment. Topologically, residues 464–483 (DNPKLKKRAITNWKLYPWVS) are cytoplasmic. A helical membrane pass occupies residues 484 to 504 (GIVIIDIVILSIWQALGDIVA). Over 505–528 (ESRTGIDSLTKYEYRNVCASSDQG) the chain is Extracellular. The helical transmembrane segment at 529-549 (SIALYLLLVFHGLILLVACFI) threads the bilayer. At 550–565 (SFKIKVVDIEEFNESK) the chain is on the cytoplasmic side. Residues 566–586 (PITTSVYIITFCLFIVIPIMV) form a helical membrane-spanning segment. The Extracellular segment spans residues 587-594 (SSPTVTTQ). A helical membrane pass occupies residues 595–615 (TTIICICALITTMLSIILLFG). At 616–770 (TKFFKMITVG…GQTEIDSNDV (155 aa)) the chain is on the cytoplasmic side. Residues 639 to 740 (SSHSQRTKSS…EEKQKDEEEI (102 aa)) form a disordered region. Basic and acidic residues-rich tracts occupy residues 676–693 (SSEK…KDHM) and 730–740 (NEEKQKDEEEI). Residues 715–760 (REQINDNIILENNNDNEEKQKDEEEIKEEKLLVSEIQAKRLSLEQN) are a coiled coil.

The protein in the N-terminal section; belongs to the BMP lipoprotein family. This sequence in the C-terminal section; belongs to the G-protein coupled receptor 3 family. GABA-B receptor subfamily.

The protein localises to the membrane. In Dictyostelium discoideum (Social amoeba), this protein is Metabotropic glutamate receptor-like protein F (grlF).